Reading from the N-terminus, the 429-residue chain is MSVWALGLNHHTAPLDLRGRFAFAIDQIEPTLRGLRASLARQPEATLLSTCNRTEIYCAGDTNDLDSTMEWLAHNGGVSPSLLRAHAYTLQDDQAARHAFRVASGLDSMVLGEPQILGQMKDAVRAAEDAGAMGTTLHQLFQRSFAVAKEVRTSTEIGAHSISMAAAAVRLAGQLFEDLGDIKVLFVGAGEMIDLAATHFAAKNPKAMAIANRSLDRGEKLASRFGAEVMRLGDLPGRLHEFDAVISCTASTLPIIGLGAVERALKRRKHRPMFMVDLAVPRDIEPEVKELSDIYLYTVDDLAHVVQTGRDSRQAAVAEAEVIIDAGVQNFMHWLDQRGSVPLIQQLNAQADAWRAAEIVRAKKLLARGESIEEVLEAMSRGLTQKMLHGAMAELHAGDASSREATARTVSKLFLRGQMPRAATERKER.

Residues 50–53 (TCNR), Ser108, 113–115 (EPQ), and Gln119 contribute to the substrate site. The active-site Nucleophile is Cys51. 188-193 (GAGEMI) contacts NADP(+).

The protein belongs to the glutamyl-tRNA reductase family. As to quaternary structure, homodimer.

The catalysed reaction is (S)-4-amino-5-oxopentanoate + tRNA(Glu) + NADP(+) = L-glutamyl-tRNA(Glu) + NADPH + H(+). It participates in porphyrin-containing compound metabolism; protoporphyrin-IX biosynthesis; 5-aminolevulinate from L-glutamyl-tRNA(Glu): step 1/2. Functionally, catalyzes the NADPH-dependent reduction of glutamyl-tRNA(Glu) to glutamate 1-semialdehyde (GSA). The protein is Glutamyl-tRNA reductase of Polaromonas naphthalenivorans (strain CJ2).